The following is a 247-amino-acid chain: MYKLVLIRHGESTWNLENRFTGWTDVDLTATGVEQAKNAGRLLKAEGYDFDLAYTSVLKRATRTLWHTLDEMDRTWLPVQHSWRLNERHYGGLQGLNKADMAKQYGDAQVLVWRRSYDTPPPALEPQDPRSERSDVRYAQLDPSQVPLTECLKDTVARVLPFWNESIAPAILSGKRVVVAAHGNSIRALIKYLDGISDDAIVGVNVPNGIPLVYELDANLKPIRHYYLGDAEAAAKAAAAVAAQGKA.

Substrate is bound by residues 8–15, 21–22, Arg-60, 87–90, Lys-98, 114–115, and 183–184; these read RHGESTWN, TG, ERHY, RR, and GN. His-9 (tele-phosphohistidine intermediate) is an active-site residue. Catalysis depends on Glu-87, which acts as the Proton donor/acceptor.

This sequence belongs to the phosphoglycerate mutase family. BPG-dependent PGAM subfamily. Homodimer.

The catalysed reaction is (2R)-2-phosphoglycerate = (2R)-3-phosphoglycerate. The protein operates within carbohydrate degradation; glycolysis; pyruvate from D-glyceraldehyde 3-phosphate: step 3/5. Functionally, catalyzes the interconversion of 2-phosphoglycerate and 3-phosphoglycerate. The protein is 2,3-bisphosphoglycerate-dependent phosphoglycerate mutase of Delftia acidovorans (strain DSM 14801 / SPH-1).